We begin with the raw amino-acid sequence, 502 residues long: Probable glycine dehydrogenase (decarboxylating) subunit 2 (502 aa).

At Lys-273 the chain carries N6-(pyridoxal phosphate)lysine.

The protein belongs to the GcvP family. C-terminal subunit subfamily. As to quaternary structure, the glycine cleavage system is composed of four proteins: P, T, L and H. In this organism, the P 'protein' is a heterodimer of two subunits. Pyridoxal 5'-phosphate is required as a cofactor.

It catalyses the reaction N(6)-[(R)-lipoyl]-L-lysyl-[glycine-cleavage complex H protein] + glycine + H(+) = N(6)-[(R)-S(8)-aminomethyldihydrolipoyl]-L-lysyl-[glycine-cleavage complex H protein] + CO2. Functionally, the glycine cleavage system catalyzes the degradation of glycine. The P protein binds the alpha-amino group of glycine through its pyridoxal phosphate cofactor; CO(2) is released and the remaining methylamine moiety is then transferred to the lipoamide cofactor of the H protein. This chain is Probable glycine dehydrogenase (decarboxylating) subunit 2, found in Thermococcus kodakarensis (strain ATCC BAA-918 / JCM 12380 / KOD1) (Pyrococcus kodakaraensis (strain KOD1)).